The following is a 636-amino-acid chain: Signal recognition particle receptor subunit alpha (636 aa).

Disordered stretches follow at residues 132–205, 217–246, and 280–314; these read APTT…ELSK, IQKHGKGLDKSSKSTKSDTPKEKGKKAPRV, and IRGTGPGGQLQDLDCSSSDDEGATQNTKPSATKGT. Basic and acidic residues-rich tracts occupy residues 137 to 146 and 153 to 165; these read KKFEDSEKAK and IETRGEKTKEKAK. Residue Ser-177 is modified to Phosphoserine. The span at 217–238 shows a compositional bias: basic and acidic residues; sequence IQKHGKGLDKSSKSTKSDTPKE. Thr-283 carries the post-translational modification Phosphothreonine. 3 positions are modified to phosphoserine: Ser-295, Ser-296, and Ser-297. Residues 302 to 312 show a composition bias toward polar residues; the sequence is ATQNTKPSATK. Thr-303 is subject to Phosphothreonine. Residues 417–634 are NG domain; the sequence is YVVTFCGVNG…NAKAVVAALM (218 aa). Residues 423–430 and 518–522 each bind GTP; these read GVNGVGKS and DTAGR. At Thr-576 the chain carries Phosphothreonine. 586 to 589 provides a ligand contact to GTP; sequence TKFD.

This sequence belongs to the GTP-binding SRP family. Heterodimer with SRPRB. Interacts with the signal recognition particle (SRP) complex subunit SRP54.

The protein resides in the endoplasmic reticulum membrane. Its function is as follows. Component of the SRP (signal recognition particle) receptor. Ensures, in conjunction with the signal recognition particle, the correct targeting of the nascent secretory proteins to the endoplasmic reticulum membrane system. Forms a guanosine 5'-triphosphate (GTP)-dependent complex with the SRP subunit SRP54. SRP receptor compaction and GTPase rearrangement drive SRP-mediated cotranslational protein translocation into the ER. This Mus musculus (Mouse) protein is Signal recognition particle receptor subunit alpha.